Here is a 540-residue protein sequence, read N- to C-terminus: Decreased expression in renal and prostate cancer protein (540 aa).

Positions 1–12 are enriched in basic and acidic residues; sequence MKEPRIFPRERP. Disordered regions lie at residues 1–264 and 304–389; these read MKEP…DARA and SQAS…AFSQ. 2 stretches are compositionally biased toward low complexity: residues 113 to 125 and 180 to 192; these read PRPG…SPGS and GPSL…LTPG. Residues 304–316 are compositionally biased toward polar residues; sequence SQASGNMGTSPSS. Residue Ser313 is modified to Phosphoserine. Residues 321–330 are compositionally biased toward low complexity; the sequence is PGPIGPNSGP. Arg375 is subject to Asymmetric dimethylarginine. Arg403 bears the Omega-N-methylarginine mark. Ser439 carries the post-translational modification Phosphoserine. A disordered region spans residues 516–540; that stretch reads GTNPAAFPRPGGPMAAMYPNGMLPP.

It belongs to the DERPC family.

The protein resides in the nucleus. Its function is as follows. Potential tumor suppressor. The protein is Decreased expression in renal and prostate cancer protein of Bos taurus (Bovine).